The primary structure comprises 64 residues: Defensin-like protein 41 (64 aa).

A disordered region spans residues 1–21 (MTQGKRKHPCDLKNPSKRAPP). 4 disulfide bridges follow: Cys10–Cys61, Cys24–Cys47, Cys33–Cys56, and Cys37–Cys58.

It belongs to the DEFL family.

This chain is Defensin-like protein 41, found in Arabidopsis thaliana (Mouse-ear cress).